Here is a 322-residue protein sequence, read N- to C-terminus: p55-v-Fos-transforming protein (322 aa).

The segment at 69–95 is disordered; sequence APGGRGQSIGRRGKVEQLSPEEEEKRR. The 64-residue stretch at 91 to 154 folds into the bZIP domain; the sequence is EEKRRIRRER…EKLEFILAAH (64 aa). The segment at 93–113 is basic motif; sequence KRRIRRERNKMAAAKCRNRRR. The leucine-zipper stretch occupies residues 119-147; sequence LQAETDQLEEEKSALQAEIANLLKEKEKL. The interval 298 to 322 is disordered; sequence AAHRKGSSSNEPSSDSLSSPTLLAL. Over residues 304-316 the composition is skewed to low complexity; it reads SSSNEPSSDSLSS.

Belongs to the bZIP family. Fos subfamily.

Its subcellular location is the host nucleus. This is p55-v-Fos-transforming protein (V-FOS) from Galliformes.